The sequence spans 143 residues: Nucleoside diphosphate kinase (143 aa).

Residues lysine 11, phenylalanine 59, arginine 87, threonine 93, arginine 104, and asparagine 114 each coordinate ATP. Residue histidine 117 is the Pros-phosphohistidine intermediate of the active site.

It belongs to the NDK family. In terms of assembly, homotetramer. It depends on Mg(2+) as a cofactor.

Its subcellular location is the cytoplasm. The enzyme catalyses a 2'-deoxyribonucleoside 5'-diphosphate + ATP = a 2'-deoxyribonucleoside 5'-triphosphate + ADP. It carries out the reaction a ribonucleoside 5'-diphosphate + ATP = a ribonucleoside 5'-triphosphate + ADP. Functionally, major role in the synthesis of nucleoside triphosphates other than ATP. The ATP gamma phosphate is transferred to the NDP beta phosphate via a ping-pong mechanism, using a phosphorylated active-site intermediate. This Idiomarina loihiensis (strain ATCC BAA-735 / DSM 15497 / L2-TR) protein is Nucleoside diphosphate kinase.